The primary structure comprises 185 residues: Peptidyl-tRNA hydrolase (185 aa).

TRNA is bound at residue Tyr-14. The active-site Proton acceptor is the His-19. TRNA contacts are provided by Tyr-64, Asn-66, and Asn-112.

This sequence belongs to the PTH family. Monomer.

The protein resides in the cytoplasm. The enzyme catalyses an N-acyl-L-alpha-aminoacyl-tRNA + H2O = an N-acyl-L-amino acid + a tRNA + H(+). Hydrolyzes ribosome-free peptidyl-tRNAs (with 1 or more amino acids incorporated), which drop off the ribosome during protein synthesis, or as a result of ribosome stalling. Functionally, catalyzes the release of premature peptidyl moieties from peptidyl-tRNA molecules trapped in stalled 50S ribosomal subunits, and thus maintains levels of free tRNAs and 50S ribosomes. The sequence is that of Peptidyl-tRNA hydrolase from Lactobacillus acidophilus (strain ATCC 700396 / NCK56 / N2 / NCFM).